The sequence spans 122 residues: MIQPQTYVNVADNSGARKLMCIRVLDASFKQSANIGDTIIAVVKEAIPNMPLKKSDIVRAVIVRSAKGIRRPDGTIIRFDDNAAVVINKEGNPRGTRVFGPVARELREREFTKIVSLAPEVL.

This sequence belongs to the universal ribosomal protein uL14 family. Part of the 50S ribosomal subunit.

It localises to the plastid. Its subcellular location is the chloroplast. Functionally, binds to 23S rRNA. This Oltmannsiellopsis viridis (Marine flagellate) protein is Large ribosomal subunit protein uL14c.